Here is a 97-residue protein sequence, read N- to C-terminus: Aspartyl/glutamyl-tRNA(Asn/Gln) amidotransferase subunit C (97 aa).

It belongs to the GatC family. In terms of assembly, heterotrimer of A, B and C subunits.

The enzyme catalyses L-glutamyl-tRNA(Gln) + L-glutamine + ATP + H2O = L-glutaminyl-tRNA(Gln) + L-glutamate + ADP + phosphate + H(+). It catalyses the reaction L-aspartyl-tRNA(Asn) + L-glutamine + ATP + H2O = L-asparaginyl-tRNA(Asn) + L-glutamate + ADP + phosphate + 2 H(+). Its function is as follows. Allows the formation of correctly charged Asn-tRNA(Asn) or Gln-tRNA(Gln) through the transamidation of misacylated Asp-tRNA(Asn) or Glu-tRNA(Gln) in organisms which lack either or both of asparaginyl-tRNA or glutaminyl-tRNA synthetases. The reaction takes place in the presence of glutamine and ATP through an activated phospho-Asp-tRNA(Asn) or phospho-Glu-tRNA(Gln). This chain is Aspartyl/glutamyl-tRNA(Asn/Gln) amidotransferase subunit C, found in Cyanothece sp. (strain PCC 7425 / ATCC 29141).